A 495-amino-acid polypeptide reads, in one-letter code: Transcription termination/antitermination protein NusA (495 aa).

An S1 motif domain is found at 135–200 (GQIITGIVKK…RGAQLFLSRS (66 aa)). Residues 302–370 (HHTMDIAVDS…KNLNVSEKVI (69 aa)) form the KH domain. 2 tandem repeats follow at residues 364–414 (NVSE…KNGL) and 439–489 (GMNE…RNIC). The interval 364–489 (NVSEKVIKTL…LLIMAARNIC (126 aa)) is 2 X 51 AA approximate repeats.

The protein belongs to the NusA family. Monomer. Binds directly to the core enzyme of the DNA-dependent RNA polymerase and to nascent RNA.

It localises to the cytoplasm. In terms of biological role, participates in both transcription termination and antitermination. This is Transcription termination/antitermination protein NusA from Buchnera aphidicola subsp. Schizaphis graminum (strain Sg).